The following is a 197-amino-acid chain: Phospholipid hydroperoxide glutathione peroxidase (197 aa).

The residue at position 40 (Ser-40) is a Phosphoserine. Sec-73 is an active-site residue. Position 73 (Sec-73) is a non-standard amino acid, selenocysteine. The residue at position 78 (Val-78) is a Phosphoserine.

This sequence belongs to the glutathione peroxidase family. As to quaternary structure, monomer. Has a tendency to form higher mass oligomers. Interacts with FUNDC1; this interaction promotes GPX4 recruitment into mitochondria through TOM/TIM complex where it is degraded by mitophagy. Present primarily in testis. Expressed in flagella of epididymal sperm. Isoform Cytoplasmic: Highly expressed in testis. Present in spermatogonia, spermatocyte and spermatid (at protein level).

It is found in the nucleus. The protein resides in the nucleolus. It localises to the mitochondrion. Its subcellular location is the cytoplasm. It carries out the reaction a hydroperoxy polyunsaturated fatty acid + 2 glutathione = a hydroxy polyunsaturated fatty acid + glutathione disulfide + H2O. The enzyme catalyses 2 glutathione + H2O2 = glutathione disulfide + 2 H2O. The catalysed reaction is tert-butyl hydroperoxide + 2 glutathione = tert-butanol + glutathione disulfide + H2O. It catalyses the reaction cumene hydroperoxide + 2 glutathione = 2-phenylpropan-2-ol + glutathione disulfide + H2O. It carries out the reaction (9S)-hydroperoxy-(10E,12Z)-octadecadienoate + 2 glutathione = (9S)-hydroxy-(10E,12Z)-octadecadienoate + glutathione disulfide + H2O. The enzyme catalyses (13S)-hydroperoxy-(9Z,11E)-octadecadienoate + 2 glutathione = (13S)-hydroxy-(9Z,11E)-octadecadienoate + glutathione disulfide + H2O. The catalysed reaction is (5S)-hydroperoxy-(6E,8Z,11Z,14Z)-eicosatetraenoate + 2 glutathione = (5S)-hydroxy-(6E,8Z,11Z,14Z)-eicosatetraenoate + glutathione disulfide + H2O. It catalyses the reaction (12R)-hydroperoxy-(5Z,8Z,10E,14Z)-eicosatetraenoate + 2 glutathione = (12R)-hydroxy-(5Z,8Z,10E,14Z)-eicosatetraenoate + glutathione disulfide + H2O. It carries out the reaction (12S)-hydroperoxy-(5Z,8Z,10E,14Z)-eicosatetraenoate + 2 glutathione = (12S)-hydroxy-(5Z,8Z,10E,14Z)-eicosatetraenoate + glutathione disulfide + H2O. The enzyme catalyses (15S)-hydroperoxy-(5Z,8Z,11Z,13E)-eicosatetraenoate + 2 glutathione = (15S)-hydroxy-(5Z,8Z,11Z,13E)-eicosatetraenoate + glutathione disulfide + H2O. The catalysed reaction is (5S)-hydroperoxy-(6E,8Z,11Z,14Z,17Z)-eicosapentaenoate + 2 glutathione = (5S)-hydroxy-(6E,8Z,11Z,14Z,17Z)-eicosapentaenoate + glutathione disulfide + H2O. It catalyses the reaction (12S)-hydroperoxy-(5Z,8Z,10E,14Z,17Z)-eicosapentaenoate + 2 glutathione = (12S)-hydroxy-(5Z,8Z,10E,14Z,17Z)-eicosapentaenoate + glutathione disulfide + H2O. It carries out the reaction (15S)-hydroperoxy-(5Z,8Z,11Z,13E,17Z)-eicosapentaenoate + 2 glutathione = (15S)-hydroxy-(5Z,8Z,11Z,13E,17Z)-eicosapentaenoate + glutathione disulfide + H2O. The enzyme catalyses (15S)-hydroperoxy-(11Z,13E)-eicosadienoate + 2 glutathione = (15S)-hydroxy-(11Z,13E)-eicosadienoate + glutathione disulfide + H2O. The catalysed reaction is (17S)-hydroperoxy-(4Z,7Z,10Z,13Z,15E,19Z)-docosahexaenoate + 2 glutathione = (17S)-hydroxy-(4Z,7Z,10Z,13Z,15E,19Z)-docosahexaenoate + glutathione disulfide + H2O. It catalyses the reaction a hydroperoxy-1,2-diacyl-glycero-3-phosphocholine + 2 glutathione = a hydroxy-1,2-diacyl-glycero-3-phosphocholine + glutathione disulfide + H2O. Essential antioxidant peroxidase that directly reduces phospholipid hydroperoxide even if they are incorporated in membranes and lipoproteins. Can also reduce fatty acid hydroperoxide, cholesterol hydroperoxide and thymine hydroperoxide. Plays a key role in protecting cells from oxidative damage by preventing membrane lipid peroxidation. Required to prevent cells from ferroptosis, a non-apoptotic cell death resulting from an iron-dependent accumulation of lipid reactive oxygen species. The presence of selenocysteine (Sec) versus Cys at the active site is essential for life: it provides resistance to overoxidation and prevents cells against ferroptosis. The presence of Sec at the active site is also essential for the survival of a specific type of parvalbumin-positive interneurons, thereby preventing against fatal epileptic seizures. May be required to protect cells from the toxicity of ingested lipid hydroperoxides. Required for normal sperm development and male fertility. Essential for maturation and survival of photoreceptor cells. Plays a role in a primary T-cell response to viral and parasitic infection by protecting T-cells from ferroptosis and by supporting T-cell expansion. Plays a role of glutathione peroxidase in platelets in the arachidonic acid metabolism. Reduces hydroperoxy ester lipids formed by a 15-lipoxygenase that may play a role as down-regulator of the cellular 15-lipoxygenase pathway. Can also reduce small soluble hydroperoxides such as H2O2, cumene hydroperoxide and tert-butyl hydroperoxide. Functionally, specifically able to suppress the production of leukotriene and prostaglandin in response to several stimuli by reducing fatty acid hydroperoxide. In terms of biological role, specifically required to prevent mitochondrial cell death by mediating reduction of cardiolipin hydroperoxide. Also required for normal sperm development and male fertility. Its function is as follows. Required for male fertility by stabilizing the condensed chromatin in sperm nuclei. The polypeptide is Phospholipid hydroperoxide glutathione peroxidase (Rattus norvegicus (Rat)).